Consider the following 393-residue polypeptide: Chorismate synthase (393 aa).

NADP(+) contacts are provided by Arg40 and Arg46. FMN-binding positions include 129–131, 249–250, Gly301, 316–320, and Arg342; these read RSS, QA, and KPIPT.

It belongs to the chorismate synthase family. As to quaternary structure, homotetramer. It depends on FMNH2 as a cofactor.

It carries out the reaction 5-O-(1-carboxyvinyl)-3-phosphoshikimate = chorismate + phosphate. It functions in the pathway metabolic intermediate biosynthesis; chorismate biosynthesis; chorismate from D-erythrose 4-phosphate and phosphoenolpyruvate: step 7/7. In terms of biological role, catalyzes the anti-1,4-elimination of the C-3 phosphate and the C-6 proR hydrogen from 5-enolpyruvylshikimate-3-phosphate (EPSP) to yield chorismate, which is the branch point compound that serves as the starting substrate for the three terminal pathways of aromatic amino acid biosynthesis. This reaction introduces a second double bond into the aromatic ring system. In Geobacter metallireducens (strain ATCC 53774 / DSM 7210 / GS-15), this protein is Chorismate synthase.